Here is a 463-residue protein sequence, read N- to C-terminus: Fumarate hydratase class II (463 aa).

Substrate-binding positions include 97–99 (SGT), R125, 128–131 (HPND), 138–140 (SSN), and T186. A compositionally biased stretch (basic and acidic residues) spans 121-134 (RGEGRKVHPNDHVN). Residues 121–142 (RGEGRKVHPNDHVNRGQSSNDT) form a disordered region. H187 functions as the Proton donor/acceptor in the catalytic mechanism. The active site involves S317. Residues S318 and 323 to 325 (KVN) contribute to the substrate site.

This sequence belongs to the class-II fumarase/aspartase family. Fumarase subfamily. In terms of assembly, homotetramer.

The protein resides in the cytoplasm. It catalyses the reaction (S)-malate = fumarate + H2O. It functions in the pathway carbohydrate metabolism; tricarboxylic acid cycle; (S)-malate from fumarate: step 1/1. In terms of biological role, involved in the TCA cycle. Catalyzes the stereospecific interconversion of fumarate to L-malate. This is Fumarate hydratase class II from Bordetella bronchiseptica (strain ATCC BAA-588 / NCTC 13252 / RB50) (Alcaligenes bronchisepticus).